Here is a 97-residue protein sequence, read N- to C-terminus: Large ribosomal subunit protein bL27 (97 aa).

The propeptide occupies 1–12 (MLKMNLANLQLF). The segment at 14–37 (HKKGGGSTSNGRDSQAKRLGAKAA) is disordered.

The protein belongs to the bacterial ribosomal protein bL27 family. In terms of processing, the N-terminus is cleaved by ribosomal processing cysteine protease Prp.

This chain is Large ribosomal subunit protein bL27, found in Streptococcus uberis (strain ATCC BAA-854 / 0140J).